Here is a 946-residue protein sequence, read N- to C-terminus: Glycine dehydrogenase (decarboxylating) (946 aa).

An N6-(pyridoxal phosphate)lysine modification is found at lysine 700.

Belongs to the GcvP family. In terms of assembly, the glycine cleavage system is composed of four proteins: P, T, L and H. Requires pyridoxal 5'-phosphate as cofactor.

The catalysed reaction is N(6)-[(R)-lipoyl]-L-lysyl-[glycine-cleavage complex H protein] + glycine + H(+) = N(6)-[(R)-S(8)-aminomethyldihydrolipoyl]-L-lysyl-[glycine-cleavage complex H protein] + CO2. Functionally, the glycine cleavage system catalyzes the degradation of glycine. The P protein binds the alpha-amino group of glycine through its pyridoxal phosphate cofactor; CO(2) is released and the remaining methylamine moiety is then transferred to the lipoamide cofactor of the H protein. The sequence is that of Glycine dehydrogenase (decarboxylating) from Pseudomonas fluorescens (strain SBW25).